The sequence spans 314 residues: PDCD10 and GCKIII kinases-associated protein 1 (314 aa).

S30 bears the Phosphoserine mark. The segment at 36–142 (DDTDKLKGKW…TQPFLEGGGT (107 aa)) is disordered. Phosphothreonine is present on T106. Polar residues predominate over residues 107-116 (PQPTGNSSPT). Phosphoserine is present on residues S238 and S241. A disordered region spans residues 267-291 (VDSGNRQEDTHGSDGDGDGEIVDED). Over residues 271–280 (NRQEDTHGSD) the composition is skewed to basic and acidic residues. Residues 281-291 (GDGDGEIVDED) show a composition bias toward acidic residues.

As to quaternary structure, interacts with KEAP1; this interaction prevents the ubiquitination of KEAP1 by TRIM25, thus protecting KEAP1 from degradation. Found in association with PDCD10 and members of the STE20 kinases, such as STK24, STK25 and STK26.

It localises to the cell membrane. Acts as a tumor suppressor. Acts as a tumor suppressor for colorectal cancer cell proliferation by targeting KEAP1/USP17/ELK1/CDK6 axis. The sequence is that of PDCD10 and GCKIII kinases-associated protein 1 from Homo sapiens (Human).